Reading from the N-terminus, the 488-residue chain is Alpha-ketoglutaric semialdehyde dehydrogenase (488 aa).

Residues K180 and 233 to 238 (GSNQVG) contribute to the NAD(+) site. The Proton acceptor role is filled by E255. The active-site Nucleophile is the C289. NAD(+) contacts are provided by Q336 and E390.

The protein belongs to the aldehyde dehydrogenase family. As to quaternary structure, homotetramer.

The catalysed reaction is 2,5-dioxopentanoate + NADP(+) + H2O = 2-oxoglutarate + NADPH + 2 H(+). The enzyme catalyses 2,5-dioxopentanoate + NAD(+) + H2O = 2-oxoglutarate + NADH + 2 H(+). Catalyzes the NAD(P)(+)-dependent oxidation of alpha-ketoglutaric semialdehyde (alphaKGSA) to alpha-ketoglutarate. Prefers NADP(+) to NAD(+) as a cosubstrate. In vitro, can also use various aldehydes. This Bacillus subtilis (strain 168) protein is Alpha-ketoglutaric semialdehyde dehydrogenase.